A 64-amino-acid polypeptide reads, in one-letter code: Large ribosomal subunit protein bL35 (64 aa).

The disordered stretch occupies residues 1 to 25 (MPKMKTHRGAAKRLKKTGTGKLKRA).

It belongs to the bacterial ribosomal protein bL35 family.

In Clostridioides difficile (strain 630) (Peptoclostridium difficile), this protein is Large ribosomal subunit protein bL35.